The primary structure comprises 297 residues: Bifunctional protein FolD 2 (297 aa).

Residues 164 to 166, Ser-193, and Ile-234 contribute to the NADP(+) site; that span reads GRS.

This sequence belongs to the tetrahydrofolate dehydrogenase/cyclohydrolase family. Homodimer.

The catalysed reaction is (6R)-5,10-methylene-5,6,7,8-tetrahydrofolate + NADP(+) = (6R)-5,10-methenyltetrahydrofolate + NADPH. It carries out the reaction (6R)-5,10-methenyltetrahydrofolate + H2O = (6R)-10-formyltetrahydrofolate + H(+). Its pathway is one-carbon metabolism; tetrahydrofolate interconversion. Its function is as follows. Catalyzes the oxidation of 5,10-methylenetetrahydrofolate to 5,10-methenyltetrahydrofolate and then the hydrolysis of 5,10-methenyltetrahydrofolate to 10-formyltetrahydrofolate. In Haloarcula marismortui (strain ATCC 43049 / DSM 3752 / JCM 8966 / VKM B-1809) (Halobacterium marismortui), this protein is Bifunctional protein FolD 2.